We begin with the raw amino-acid sequence, 911 residues long: DNA ligase 4 (911 aa).

The ATP site is built by Glu-271, Thr-272, Lys-273, Leu-274, Arg-278, Glu-331, Lys-345, Phe-367, Glu-427, Lys-432, Lys-449, and Lys-451. Lys-273 (N6-AMP-lysine intermediate) is an active-site residue. Position 331 (Glu-331) interacts with Mg(2+). Glu-427 lines the Mg(2+) pocket. The segment at 610–620 is required for catalytic activity; the sequence is LATKHLHVGDD. 2 consecutive BRCT domains span residues 654–743 and 808–911; these read KVSN…PRFM and SPLS…QYLL.

This sequence belongs to the ATP-dependent DNA ligase family. In terms of assembly, interacts with XRCC4; the LIG4-XRCC4 subcomplex has a 1:2 stoichiometry and XRCC4 is required for LIG4 stability. Component of the core long-range non-homologous end joining (NHEJ) complex (also named DNA-PK complex) composed of PRKDC, LIG4, XRCC4, XRCC6/Ku70, XRCC5/Ku86 and NHEJ1/XLF. Additional component of the NHEJ complex includes PAXX. Following autophosphorylation, PRKDC dissociates from DNA, leading to formation of the short-range NHEJ complex, composed of LIG4, XRCC4, XRCC6/Ku70, XRCC5/Ku86 and NHEJ1/XLF. Interacts with DCLRE1C; the interaction is direct. Interacts with APLF. The cofactor is Mg(2+).

The protein localises to the nucleus. The enzyme catalyses ATP + (deoxyribonucleotide)n-3'-hydroxyl + 5'-phospho-(deoxyribonucleotide)m = (deoxyribonucleotide)n+m + AMP + diphosphate.. Its function is as follows. DNA ligase involved in DNA non-homologous end joining (NHEJ); required for double-strand break (DSB) repair and V(D)J recombination. Catalyzes the NHEJ ligation step of the broken DNA during DSB repair by resealing the DNA breaks after the gap filling is completed. Joins single-strand breaks in a double-stranded polydeoxynucleotide in an ATP-dependent reaction. LIG4 is mechanistically flexible: it can ligate nicks as well as compatible DNA overhangs alone, while in the presence of XRCC4, it can ligate ends with 2-nucleotides (nt) microhomology and 1-nt gaps. Forms a subcomplex with XRCC4; the LIG4-XRCC4 subcomplex is responsible for the NHEJ ligation step and XRCC4 enhances the joining activity of LIG4. Binding of the LIG4-XRCC4 complex to DNA ends is dependent on the assembly of the DNA-dependent protein kinase complex DNA-PK to these DNA ends. LIG4 regulates nuclear localization of XRCC4. This chain is DNA ligase 4, found in Mus musculus (Mouse).